The chain runs to 147 residues: Transcriptional regulator MraZ (147 aa).

SpoVT-AbrB domains are found at residues 5–50 and 79–122; these read AIAL…PLSA and AQEE…SDAG.

Belongs to the MraZ family. Forms oligomers.

The protein localises to the cytoplasm. Its subcellular location is the nucleoid. This chain is Transcriptional regulator MraZ, found in Aromatoleum aromaticum (strain DSM 19018 / LMG 30748 / EbN1) (Azoarcus sp. (strain EbN1)).